A 525-amino-acid polypeptide reads, in one-letter code: MTSTSHFVASTVKKPRSRYGCLICRSMRKKCDEVHPQCGRCLKAGKQCIWKQPGTERKNKTKWRKAMQNNSIPIQDLADDFELDFPDTLDLTNPDALPVLGESIVNPISLPVDVASPFLPSECYPSKVELPYFPLLSKPNTLLSLLNDEEISCCEYYCYSVAPITTILPGQPNFLPQLLLPMALHEESVLYSLVASGYRLKYGNDNSLALQKSKVFVNRALLTLPERRSLNLSKSEFVVSLACYILLVYTEIAFADTTEWATYFLNAYNMINKMGGFKILKECSSEGKLLAECFAYFDILASQSNLNGTYYSISDYTDVYGVDELQLFESLENCIKPLVLIIGDIINLLVESRRAGFDDLQHTLNIYEKSQTIEGKIWSCVPQYEDMKSNKLDSEKSEPLQLFKLYKTTTEMYLRQVISRMPPVSLEMQVLLHKQTQLIDLLLESSLRNSLSFPMLIAGLNAATDLQRTNFKNRVNCLCQNYTIGSLKKVWIVVQEIWKMNQNGNICIDWYEVVQKFGWRLNTGV.

Residues 21–48 (CLICRSMRKKCDEVHPQCGRCLKAGKQC) constitute a DNA-binding region (zn(2)-C6 fungal-type).

The protein localises to the cytoplasm. It is found in the nucleus. This is an uncharacterized protein from Schizosaccharomyces pombe (strain 972 / ATCC 24843) (Fission yeast).